The chain runs to 404 residues: Cysteine desulfurase IscS (404 aa).

Pyridoxal 5'-phosphate-binding positions include 75–76 (AT), asparagine 155, glutamine 183, and 203–205 (SAH). Position 206 is an N6-(pyridoxal phosphate)lysine (lysine 206). Pyridoxal 5'-phosphate is bound at residue threonine 243. Residue cysteine 328 is the Cysteine persulfide intermediate of the active site. [2Fe-2S] cluster is bound at residue cysteine 328.

The protein belongs to the class-V pyridoxal-phosphate-dependent aminotransferase family. NifS/IscS subfamily. As to quaternary structure, homodimer. Forms a heterotetramer with IscU, interacts with other sulfur acceptors. It depends on pyridoxal 5'-phosphate as a cofactor.

It is found in the cytoplasm. The catalysed reaction is (sulfur carrier)-H + L-cysteine = (sulfur carrier)-SH + L-alanine. It functions in the pathway cofactor biosynthesis; iron-sulfur cluster biosynthesis. Functionally, master enzyme that delivers sulfur to a number of partners involved in Fe-S cluster assembly, tRNA modification or cofactor biosynthesis. Catalyzes the removal of elemental sulfur atoms from cysteine to produce alanine. Functions as a sulfur delivery protein for Fe-S cluster synthesis onto IscU, an Fe-S scaffold assembly protein, as well as other S acceptor proteins. This Neisseria gonorrhoeae (strain ATCC 700825 / FA 1090) protein is Cysteine desulfurase IscS.